The chain runs to 50 residues: uncharacterized protein (50 aa).

Residues 5 to 19 (IIIIVIVIIIFFFYL) traverse the membrane as a helical segment. A coiled-coil region spans residues 19–50 (LKQKKLTNCETQVVKVQKDIDEINLKLKKLNK).

It is found in the membrane. This is an uncharacterized protein from Acheta domesticus (House cricket).